The sequence spans 532 residues: CTP synthase (532 aa).

Residues 1 to 269 (MNQASTRFIF…DTQILNHFNI (269 aa)) are amidoligase domain. Residue serine 17 participates in CTP binding. UTP is bound at residue serine 17. ATP contacts are provided by residues 18-23 (SLGKGL) and aspartate 75. Mg(2+) contacts are provided by aspartate 75 and glutamate 143. Residues 150–152 (DIE), 190–195 (KTKPTQ), and lysine 226 contribute to the CTP site. Residues 190-195 (KTKPTQ) and lysine 226 each bind UTP. A Glutamine amidotransferase type-1 domain is found at 294–532 (NVAIIGKYIK…FISFIKASLD (239 aa)). Glycine 355 provides a ligand contact to L-glutamine. Catalysis depends on cysteine 382, which acts as the Nucleophile; for glutamine hydrolysis. L-glutamine-binding positions include 383–386 (MGMQ), glutamate 406, and arginine 462. Residues histidine 509 and glutamate 511 contribute to the active site.

The protein belongs to the CTP synthase family. Homotetramer.

It catalyses the reaction UTP + L-glutamine + ATP + H2O = CTP + L-glutamate + ADP + phosphate + 2 H(+). It carries out the reaction L-glutamine + H2O = L-glutamate + NH4(+). The catalysed reaction is UTP + NH4(+) + ATP = CTP + ADP + phosphate + 2 H(+). The protein operates within pyrimidine metabolism; CTP biosynthesis via de novo pathway; CTP from UDP: step 2/2. With respect to regulation, allosterically activated by GTP, when glutamine is the substrate; GTP has no effect on the reaction when ammonia is the substrate. The allosteric effector GTP functions by stabilizing the protein conformation that binds the tetrahedral intermediate(s) formed during glutamine hydrolysis. Inhibited by the product CTP, via allosteric rather than competitive inhibition. Functionally, catalyzes the ATP-dependent amination of UTP to CTP with either L-glutamine or ammonia as the source of nitrogen. Regulates intracellular CTP levels through interactions with the four ribonucleotide triphosphates. This is CTP synthase from Ehrlichia chaffeensis (strain ATCC CRL-10679 / Arkansas).